The chain runs to 555 residues: Urocanate hydratase (555 aa).

NAD(+) is bound by residues 52 to 53 (GG), Q130, 176 to 178 (GMG), E196, R201, 242 to 243 (NA), 263 to 267 (QTSAH), 273 to 274 (YL), and Y322. C410 is an active-site residue. G492 is a binding site for NAD(+).

This sequence belongs to the urocanase family. NAD(+) serves as cofactor.

It is found in the cytoplasm. It carries out the reaction 4-imidazolone-5-propanoate = trans-urocanate + H2O. Its pathway is amino-acid degradation; L-histidine degradation into L-glutamate; N-formimidoyl-L-glutamate from L-histidine: step 2/3. Functionally, catalyzes the conversion of urocanate to 4-imidazolone-5-propionate. The protein is Urocanate hydratase of Shewanella baltica (strain OS185).